We begin with the raw amino-acid sequence, 183 residues long: V-type ATP synthase subunit E (183 aa).

Belongs to the V-ATPase E subunit family.

Its function is as follows. Produces ATP from ADP in the presence of a proton gradient across the membrane. The chain is V-type ATP synthase subunit E from Fusobacterium nucleatum subsp. nucleatum (strain ATCC 25586 / DSM 15643 / BCRC 10681 / CIP 101130 / JCM 8532 / KCTC 2640 / LMG 13131 / VPI 4355).